The chain runs to 196 residues: ATP-dependent Clp protease proteolytic subunit (196 aa).

S96 serves as the catalytic Nucleophile. H121 is a catalytic residue.

The protein belongs to the peptidase S14 family. As to quaternary structure, fourteen ClpP subunits assemble into 2 heptameric rings which stack back to back to give a disk-like structure with a central cavity, resembling the structure of eukaryotic proteasomes.

It localises to the cytoplasm. It catalyses the reaction Hydrolysis of proteins to small peptides in the presence of ATP and magnesium. alpha-casein is the usual test substrate. In the absence of ATP, only oligopeptides shorter than five residues are hydrolyzed (such as succinyl-Leu-Tyr-|-NHMec, and Leu-Tyr-Leu-|-Tyr-Trp, in which cleavage of the -Tyr-|-Leu- and -Tyr-|-Trp bonds also occurs).. Its function is as follows. Cleaves peptides in various proteins in a process that requires ATP hydrolysis. Has a chymotrypsin-like activity. Plays a major role in the degradation of misfolded proteins. The chain is ATP-dependent Clp protease proteolytic subunit from Streptococcus pneumoniae (strain P1031).